Reading from the N-terminus, the 452-residue chain is Pup--protein ligase (452 aa).

E9 contacts Mg(2+). R53 is a binding site for ATP. Residue Y55 participates in Mg(2+) binding. The active-site Proton acceptor is the D57. E63 is a Mg(2+) binding site. ATP-binding residues include T66 and W419.

This sequence belongs to the Pup ligase/Pup deamidase family. Pup-conjugating enzyme subfamily.

The catalysed reaction is ATP + [prokaryotic ubiquitin-like protein]-L-glutamate + [protein]-L-lysine = ADP + phosphate + N(6)-([prokaryotic ubiquitin-like protein]-gamma-L-glutamyl)-[protein]-L-lysine.. It participates in protein degradation; proteasomal Pup-dependent pathway. The protein operates within protein modification; protein pupylation. Functionally, catalyzes the covalent attachment of the prokaryotic ubiquitin-like protein modifier Pup to the proteasomal substrate proteins, thereby targeting them for proteasomal degradation. This tagging system is termed pupylation. The ligation reaction involves the side-chain carboxylate of the C-terminal glutamate of Pup and the side-chain amino group of a substrate lysine. In Saccharomonospora viridis (strain ATCC 15386 / DSM 43017 / JCM 3036 / CCUG 5913 / NBRC 12207 / NCIMB 9602 / P101) (Thermoactinomyces viridis), this protein is Pup--protein ligase.